A 99-amino-acid polypeptide reads, in one-letter code: MESEQMLEGQTQVAENPHSEYGLTDSVERIVENEKINAEKSSKQKVDLQSLPTRAYLDQTVVPILLQGLAVLAKERPPNPIEFLASYLLKNKAQFEDRN.

Met1 carries the N-acetylmethionine modification. Positions 1–26 (MESEQMLEGQTQVAENPHSEYGLTDS) are disordered. Ser19 carries the phosphoserine modification. At Lys35 the chain carries N6-acetyllysine; alternate. A Glycyl lysine isopeptide (Lys-Gly) (interchain with G-Cter in SUMO2); alternate cross-link involves residue Lys35.

The protein belongs to the dpy-30 family. In terms of assembly, homodimer. Core component of several methyltransferase-containing complexes including MLL1/MLL, MLL2/3 (also named ASCOM complex) and MLL4/WBP7. Each complex is at least composed of ASH2L, RBBP5, WDR5, DPY30, one or more specific histone methyltransferases (KMT2A/MLL1, KMT2D/MLL2, KMT2C/MLL3 and KMT2B/MLL4), and the facultative components MEN1, HCFC1, HCFC2, NCOA6, KDM6A, PAXIP1/PTIP, PAGR1 and alpha- and beta-tubulin PAXIP1/PTIP, PAGR1 and alpha- and beta-tubulin. Interacts with ASH2L. The interaction with ASH2L is direct. Interacts with ARFGEF1. Component of the SET1 complex, at least composed of the catalytic subunit (SETD1A or SETD1B), WDR5, WDR82, RBBP5, ASH2L/ASH2, CXXC1/CFP1, HCFC1 and DPY30.

Its subcellular location is the nucleus. It is found in the golgi apparatus. It localises to the trans-Golgi network. Its function is as follows. As part of the MLL1/MLL complex, involved in the methylation of histone H3 at 'Lys-4', particularly trimethylation. Histone H3 'Lys-4' methylation represents a specific tag for epigenetic transcriptional activation. May play some role in histone H3 acetylation. In embryonic stem (ES) cells, plays a crucial role in the differentiation potential, particularly along the neural lineage, regulating gene induction and histone H3 'Lys-4' methylation at key developmental loci, including that mediated by retinoic acid. Does not affect ES cell self-renewal. May also play an indirect or direct role in endosomal transport. The chain is Protein dpy-30 homolog (Dpy30) from Mus musculus (Mouse).